Reading from the N-terminus, the 620-residue chain is DNA primase (620 aa).

Residues Cys-38–Cys-62 form a CHC2-type zinc finger. Residues Leu-266–Ala-350 form the Toprim domain. 3 residues coordinate Mg(2+): Glu-272, Asp-319, and Asp-321.

The protein belongs to the DnaG primase family. In terms of assembly, monomer. Interacts with DnaB. It depends on Zn(2+) as a cofactor. The cofactor is Mg(2+).

The enzyme catalyses ssDNA + n NTP = ssDNA/pppN(pN)n-1 hybrid + (n-1) diphosphate.. RNA polymerase that catalyzes the synthesis of short RNA molecules used as primers for DNA polymerase during DNA replication. The chain is DNA primase from Mycoplasma pneumoniae (strain ATCC 29342 / M129 / Subtype 1) (Mycoplasmoides pneumoniae).